Consider the following 243-residue polypeptide: Mitochondrial import inner membrane translocase subunit TIM17-2 (243 aa).

4 helical membrane passes run 19 to 36, 66 to 83, 90 to 109, and 115 to 137; these read IGGAFGMGAVGGSAFHFI, FAVWGGLFSTFDCTMVYL, WNSIIAGAATGGFLSMRQGA, and SAIFGGVLLALIEGAGIMLNKVL. Tandem repeats lie at residues 149–151, 152–154, 155–157, 158–160, 161–163, 164–166, 167–169, 170–172, 173–175, and 176–178. The 10 X approximate repeats GMQ/P stretch occupies residues 149–178; that stretch reads GMQGMPGMQGMQGMPGMPGMQGMPGMQGMQ. The span at 166–183 shows a compositional bias: low complexity; it reads PGMQGMPGMQGMQMGQMQ. Positions 166 to 243 are disordered; it reads PGMQGMPGMQ…APPVPSFEFK (78 aa). The segment covering 184 to 198 has biased composition (polar residues); that stretch reads SQAQIRSESQNQNTA. The segment covering 211–228 has biased composition (basic and acidic residues); the sequence is FDKKKEEVQPGSESKTEV.

It belongs to the Tim17/Tim22/Tim23 family. As to quaternary structure, component of the TIM17:23 complex at least composed of TIM23, TIM17 and TIM50. The complex interacts with the TIM44 component of the PAM complex. Interacts with TIM23-2. Expressed in roots, flowers, leaves and young cotyledons.

Its subcellular location is the mitochondrion inner membrane. It localises to the mitochondrion outer membrane. In terms of biological role, essential component of the TIM17:23 complex, a complex that mediates the translocation of transit peptide-containing proteins across the mitochondrial inner membrane. Links the inner and outer membranes. This Arabidopsis thaliana (Mouse-ear cress) protein is Mitochondrial import inner membrane translocase subunit TIM17-2 (TIM17-2).